Here is a 357-residue protein sequence, read N- to C-terminus: Fluoren-9-ol dehydrogenase (357 aa).

NADP(+) is bound by residues 36–67 and Asp87; that span reads VTGGARGIGRSLCEGLLRAGAKVVAADLTWDD. Tyr198 serves as the catalytic Proton acceptor. Residue Lys202 coordinates NADP(+).

Belongs to the short-chain dehydrogenases/reductases (SDR) family.

It carries out the reaction 9H-fluoren-9-ol + NADP(+) = 9H-fluoren-9-one + NADPH + H(+). The catalysed reaction is 9H-fluoren-9-ol + NAD(+) = 9H-fluoren-9-one + NADH + H(+). It participates in aromatic compound metabolism. Functionally, catalyzes the dehydrogenation of both 9-fluorenol and 1,1a-dihydroxy-1-hydro-9-fluorenone to produce 9-fluorenone and 2'-carboxy-2,3- dihydroxybiphenyl, respectively. The protein is Fluoren-9-ol dehydrogenase of Terrabacter sp. (strain DBF63).